The following is a 137-amino-acid chain: Large ribosomal subunit protein uL16 (137 aa).

Belongs to the universal ribosomal protein uL16 family. As to quaternary structure, part of the 50S ribosomal subunit.

Its function is as follows. Binds 23S rRNA and is also seen to make contacts with the A and possibly P site tRNAs. The chain is Large ribosomal subunit protein uL16 from Nitratidesulfovibrio vulgaris (strain ATCC 29579 / DSM 644 / CCUG 34227 / NCIMB 8303 / VKM B-1760 / Hildenborough) (Desulfovibrio vulgaris).